The following is a 495-amino-acid chain: Aspartyl/glutamyl-tRNA(Asn/Gln) amidotransferase subunit B (495 aa).

It belongs to the GatB/GatE family. GatB subfamily. Heterotrimer of A, B and C subunits.

The enzyme catalyses L-glutamyl-tRNA(Gln) + L-glutamine + ATP + H2O = L-glutaminyl-tRNA(Gln) + L-glutamate + ADP + phosphate + H(+). It catalyses the reaction L-aspartyl-tRNA(Asn) + L-glutamine + ATP + H2O = L-asparaginyl-tRNA(Asn) + L-glutamate + ADP + phosphate + 2 H(+). Functionally, allows the formation of correctly charged Asn-tRNA(Asn) or Gln-tRNA(Gln) through the transamidation of misacylated Asp-tRNA(Asn) or Glu-tRNA(Gln) in organisms which lack either or both of asparaginyl-tRNA or glutaminyl-tRNA synthetases. The reaction takes place in the presence of glutamine and ATP through an activated phospho-Asp-tRNA(Asn) or phospho-Glu-tRNA(Gln). In Methanosarcina mazei (strain ATCC BAA-159 / DSM 3647 / Goe1 / Go1 / JCM 11833 / OCM 88) (Methanosarcina frisia), this protein is Aspartyl/glutamyl-tRNA(Asn/Gln) amidotransferase subunit B.